The chain runs to 170 residues: Adenine phosphoribosyltransferase (170 aa).

Belongs to the purine/pyrimidine phosphoribosyltransferase family. Homodimer.

It is found in the cytoplasm. It carries out the reaction AMP + diphosphate = 5-phospho-alpha-D-ribose 1-diphosphate + adenine. Its pathway is purine metabolism; AMP biosynthesis via salvage pathway; AMP from adenine: step 1/1. Functionally, catalyzes a salvage reaction resulting in the formation of AMP, that is energically less costly than de novo synthesis. The sequence is that of Adenine phosphoribosyltransferase from Pseudothermotoga lettingae (strain ATCC BAA-301 / DSM 14385 / NBRC 107922 / TMO) (Thermotoga lettingae).